The sequence spans 299 residues: uncharacterized protein (299 aa).

The tract at residues 1–38 (MSLDSNSDTEFELVPKFQTQPTRGDAPKSPELEEVSTV) is disordered.

Belongs to the calycin superfamily. Fatty-acid binding protein (FABP) family.

This is an uncharacterized protein from Caenorhabditis elegans.